A 272-amino-acid chain; its full sequence is NADPH-dependent aldehyde reductase 2, chloroplastic (272 aa).

The N-terminal 53 residues, 1 to 53, are a transit peptide targeting the chloroplast; it reads MAAASSVSSPPLCLAGRVAIVTGSSRGIGRAIAIHLAELGARVVVNYSTSPVE. Residue 26–50 coordinates NADP(+); the sequence is RGIGRAIAIHLAELGARVVVNYSTS. Serine 165 contributes to the substrate binding site. The active-site Proton acceptor is tyrosine 179.

It belongs to the short-chain dehydrogenases/reductases (SDR) family.

The protein resides in the plastid. It localises to the chloroplast. Its function is as follows. Aldehyde reductase that catalyzes the reduction of the aldehyde carbonyl groups on saturated and alpha,beta-unsaturated aldehydes with more than 5 carbons. No activity on alpha,beta-unsaturated ketones. Can use propionaldehyde, butyraldehyde, methylglyoxal, (e)-2-pentenal, (E)-2-hexenal, (Z)-3-hexenal and (E)-2-nonenal as substrates, but not propenal (acrolein), crotonaldehyde, 2-butanone, 3-buten-2-one or 1-penten-3-one. The chain is NADPH-dependent aldehyde reductase 2, chloroplastic from Arabidopsis thaliana (Mouse-ear cress).